Reading from the N-terminus, the 290-residue chain is Diaminopimelate epimerase (290 aa).

Substrate-binding residues include asparagine 17, glutamine 49, and asparagine 69. Catalysis depends on cysteine 78, which acts as the Proton donor. Substrate contacts are provided by residues 79–80, asparagine 166, asparagine 199, and 217–218; these read GN and ER. Cysteine 226 functions as the Proton acceptor in the catalytic mechanism. 227 to 228 is a substrate binding site; sequence GS.

The protein belongs to the diaminopimelate epimerase family. Homodimer.

It localises to the cytoplasm. The enzyme catalyses (2S,6S)-2,6-diaminopimelate = meso-2,6-diaminopimelate. It functions in the pathway amino-acid biosynthesis; L-lysine biosynthesis via DAP pathway; DL-2,6-diaminopimelate from LL-2,6-diaminopimelate: step 1/1. In terms of biological role, catalyzes the stereoinversion of LL-2,6-diaminopimelate (L,L-DAP) to meso-diaminopimelate (meso-DAP), a precursor of L-lysine and an essential component of the bacterial peptidoglycan. This chain is Diaminopimelate epimerase, found in Nitrobacter hamburgensis (strain DSM 10229 / NCIMB 13809 / X14).